A 549-amino-acid polypeptide reads, in one-letter code: Glucose-6-phosphate isomerase (549 aa).

The Proton donor role is filled by glutamate 355. Active-site residues include histidine 387 and lysine 515.

The protein belongs to the GPI family.

It localises to the cytoplasm. The catalysed reaction is alpha-D-glucose 6-phosphate = beta-D-fructose 6-phosphate. The protein operates within carbohydrate biosynthesis; gluconeogenesis. It participates in carbohydrate degradation; glycolysis; D-glyceraldehyde 3-phosphate and glycerone phosphate from D-glucose: step 2/4. Functionally, catalyzes the reversible isomerization of glucose-6-phosphate to fructose-6-phosphate. This Mannheimia succiniciproducens (strain KCTC 0769BP / MBEL55E) protein is Glucose-6-phosphate isomerase.